A 468-amino-acid chain; its full sequence is uncharacterized protein (468 aa).

Coiled coils occupy residues 10–94 (NEAL…VKEL) and 147–279 (FVEL…EASI). The segment at 324–369 (TPRTVDPIPEGTIIKKESSDDAMFSGLKKSKPKKSNKSNNNQADSD) is disordered. Ser-342 is subject to Phosphoserine. The stretch at 399-445 (VEQLKSRIAHFKEQQDSVTKQRIEKAKQEIEKLEAKYNSKEEKTLTE) forms a coiled coil.

Its subcellular location is the cytoplasm. This is an uncharacterized protein from Schizosaccharomyces pombe (strain 972 / ATCC 24843) (Fission yeast).